A 377-amino-acid polypeptide reads, in one-letter code: G-protein coupled receptor 54 (377 aa).

At methionine 1–proline 49 the chain is on the extracellular side. N-linked (GlcNAc...) asparagine glycans are attached at residues asparagine 9, asparagine 17, and asparagine 22. Residues leucine 50–isoleucine 70 form a helical membrane-spanning segment. The Cytoplasmic segment spans residues serine 71–aspartate 91. The chain crosses the membrane as a helical span at residues isoleucine 92–isoleucine 112. The Extracellular segment spans residues phenylalanine 113 to lysine 119. Residues cysteine 118 and cysteine 198 are joined by a disulfide bond. Residues phenylalanine 120 to serine 140 form a helical membrane-spanning segment. Residues glycine 141–lysine 160 are Cytoplasmic-facing. A helical membrane pass occupies residues valine 161 to leucine 181. Over methionine 182–arginine 209 the chain is Extracellular. A helical transmembrane segment spans residues alanine 210 to cysteine 230. At tyrosine 231 to methionine 269 the chain is on the cytoplasmic side. Residues valine 270–phenylalanine 290 form a helical membrane-spanning segment. Topologically, residues glutamine 291 to lysine 305 are extracellular. The helical transmembrane segment at isoleucine 306–methionine 328 threads the bilayer. At glycine 329–asparagine 377 the chain is on the cytoplasmic side.

This sequence belongs to the G-protein coupled receptor 1 family. Expressed in a significantly high percentage (45-60%) of mature GnRH1, GnRH2, and GnRH3 neurons and in immature GnRH3 neurons, which had migrated to the vicinity of their final locations in the brain. Only 5% of immature GnRH1 and GnRH2 neurons have receptor transcripts.

It localises to the cell membrane. Functionally, receptor speculated to be essential for sexual development. May regulate gonadotropin-releasing hormone (GnRH) secretion. The receptor expression could be a 'stop signal' for GnRH1, GnRH2, and GnRH3 neuronal migration, leading to suppression of cell growth and modulation of GnRH secretion, which is important for normal sexual development. In Oreochromis niloticus (Nile tilapia), this protein is G-protein coupled receptor 54 (gpr54).